A 200-amino-acid polypeptide reads, in one-letter code: Recombination protein RecR (200 aa).

Residues 59 to 74 (CSTCGSLDTQDPCAIC) form a C4-type zinc finger. In terms of domain architecture, Toprim spans 82–177 (SLICVVEEVG…TVSMLARGVP (96 aa)).

Belongs to the RecR family.

Functionally, may play a role in DNA repair. It seems to be involved in an RecBC-independent recombinational process of DNA repair. It may act with RecF and RecO. The chain is Recombination protein RecR from Phenylobacterium zucineum (strain HLK1).